The sequence spans 269 residues: RBPJ-interacting and tubulin-associated protein 1 (269 aa).

The Nuclear export signal motif lies at 5–17; that stretch reads VELAISGMQTLHV. Disordered regions lie at residues 67-94 and 145-269; these read GTGVSQALGANGSCESTSSSGSTPTLTP and PATP…PPWK. Over residues 79-93 the composition is skewed to low complexity; the sequence is SCESTSSSGSTPTLT. The short motif at 92 to 108 is the Nuclear localization signal element; sequence LTPRKKNKYRLISHTPS. Residues 128-156 form an interaction with RBPJ/RBPSUH region; that stretch reads WMARGDAAKLHALFWTPPATPRGSHSPRP. An interaction with tubulin region spans residues 156–269; the sequence is PRETPVRCVH…ATQKTKPPWK (114 aa). Polar residues-rich tracts occupy residues 202 to 220 and 247 to 269; these read LTHPNVPSTGHTPASSPCT and VSVSVPTTPRQGGATQKTKPPWK.

Belongs to the RITA family. As to quaternary structure, interacts with RBPJ/RBPSUH.

It localises to the cytoplasm. It is found in the nucleus. The protein resides in the cytoskeleton. The protein localises to the microtubule organizing center. Its subcellular location is the centrosome. Tubulin-binding protein that acts as a negative regulator of Notch signaling pathway. Shuttles between the cytoplasm and the nucleus and mediates the nuclear export of RBPJ/RBPSUH, thereby preventing the interaction between RBPJ/RBPSUH and NICD product of Notch proteins (Notch intracellular domain), leading to down-regulate Notch-mediated transcription. May play a role in neurogenesis. The polypeptide is RBPJ-interacting and tubulin-associated protein 1 (RITA1) (Bos taurus (Bovine)).